Consider the following 248-residue polypeptide: 2,3-bisphosphoglycerate-dependent phosphoglycerate mutase (248 aa).

Residues Arg-8–Asn-15, Thr-21–Gly-22, Arg-60, Glu-87–Tyr-90, Lys-98, Arg-114–Arg-115, and Gly-183–Asn-184 contribute to the substrate site. The Tele-phosphohistidine intermediate role is filled by His-9. The active-site Proton donor/acceptor is Glu-87.

Belongs to the phosphoglycerate mutase family. BPG-dependent PGAM subfamily.

The enzyme catalyses (2R)-2-phosphoglycerate = (2R)-3-phosphoglycerate. Its pathway is carbohydrate degradation; glycolysis; pyruvate from D-glyceraldehyde 3-phosphate: step 3/5. Its function is as follows. Catalyzes the interconversion of 2-phosphoglycerate and 3-phosphoglycerate. The sequence is that of 2,3-bisphosphoglycerate-dependent phosphoglycerate mutase from Elusimicrobium minutum (strain Pei191).